The sequence spans 452 residues: tRNA modification GTPase MnmE (452 aa).

Residues Arg-22, Glu-79, and Lys-119 each coordinate (6S)-5-formyl-5,6,7,8-tetrahydrofolate. In terms of domain architecture, TrmE-type G spans 215–375 (GMKVVIAGRP…LRQHLKQSMG (161 aa)). Asn-225 contributes to the K(+) binding site. GTP-binding positions include 225–230 (NAGKSS), 244–250 (TDIAGTT), 269–272 (DTAG), and 333–336 (NKAD). Position 229 (Ser-229) interacts with Mg(2+). Residues Thr-244, Ile-246, and Thr-249 each coordinate K(+). Residue Thr-250 coordinates Mg(2+). (6S)-5-formyl-5,6,7,8-tetrahydrofolate is bound at residue Lys-452.

This sequence belongs to the TRAFAC class TrmE-Era-EngA-EngB-Septin-like GTPase superfamily. TrmE GTPase family. As to quaternary structure, homodimer. Heterotetramer of two MnmE and two MnmG subunits. K(+) is required as a cofactor.

The protein localises to the cytoplasm. In terms of biological role, exhibits a very high intrinsic GTPase hydrolysis rate. Involved in the addition of a carboxymethylaminomethyl (cmnm) group at the wobble position (U34) of certain tRNAs, forming tRNA-cmnm(5)s(2)U34. This is tRNA modification GTPase MnmE from Histophilus somni (strain 2336) (Haemophilus somnus).